The primary structure comprises 647 residues: Glutamyl-tRNA(Gln) amidotransferase subunit B, mitochondrial (647 aa).

Positions 87 to 106 (QAKALKKSGHKKKKSSDNQT) are disordered. Residues 90-100 (ALKKSGHKKKK) show a composition bias toward basic residues.

This sequence belongs to the GatB/GatE family. GatB subfamily. As to quaternary structure, subunit of the heterotrimeric GatCAB amidotransferase (AdT) complex, composed of A, B and C subunits.

The protein resides in the mitochondrion. It carries out the reaction L-glutamyl-tRNA(Gln) + L-glutamine + ATP + H2O = L-glutaminyl-tRNA(Gln) + L-glutamate + ADP + phosphate + H(+). In terms of biological role, allows the formation of correctly charged Gln-tRNA(Gln) through the transamidation of misacylated Glu-tRNA(Gln) in the mitochondria. The reaction takes place in the presence of glutamine and ATP through an activated gamma-phospho-Glu-tRNA(Gln). The sequence is that of Glutamyl-tRNA(Gln) amidotransferase subunit B, mitochondrial from Neurospora crassa (strain ATCC 24698 / 74-OR23-1A / CBS 708.71 / DSM 1257 / FGSC 987).